A 395-amino-acid chain; its full sequence is NAD(P)H-quinone oxidoreductase subunit H, chloroplastic (395 aa).

The protein belongs to the complex I 49 kDa subunit family. NDH is composed of at least 16 different subunits, 5 of which are encoded in the nucleus.

Its subcellular location is the plastid. It is found in the chloroplast thylakoid membrane. The catalysed reaction is a plastoquinone + NADH + (n+1) H(+)(in) = a plastoquinol + NAD(+) + n H(+)(out). It carries out the reaction a plastoquinone + NADPH + (n+1) H(+)(in) = a plastoquinol + NADP(+) + n H(+)(out). In terms of biological role, NDH shuttles electrons from NAD(P)H:plastoquinone, via FMN and iron-sulfur (Fe-S) centers, to quinones in the photosynthetic chain and possibly in a chloroplast respiratory chain. The immediate electron acceptor for the enzyme in this species is believed to be plastoquinone. Couples the redox reaction to proton translocation, and thus conserves the redox energy in a proton gradient. The polypeptide is NAD(P)H-quinone oxidoreductase subunit H, chloroplastic (Staurastrum punctulatum (Green alga)).